The chain runs to 624 residues: Low affinity potassium transport system protein Kup (624 aa).

The next 12 membrane-spanning stretches (helical) occupy residues 9 to 29 (LPAI…TSPL), 49 to 69 (VFGF…IKYL), 103 to 123 (VIMG…TPAI), 137 to 157 (PQLD…LFMI), 165 to 185 (VGKL…GLGL), 213 to 233 (VSFI…ALYA), 247 to 267 (WFTV…ALLL), 276 to 296 (PFFL…AALA), 337 to 357 (IYIP…IVIV), 365 to 385 (LAAA…ILST), 398 to 418 (FVAL…TANL), and 421 to 441 (LLSG…VMTT).

Belongs to the HAK/KUP transporter (TC 2.A.72) family.

The protein resides in the cell inner membrane. The catalysed reaction is K(+)(in) + H(+)(in) = K(+)(out) + H(+)(out). Its function is as follows. Responsible for the low-affinity transport of potassium into the cell. Likely operates as a K(+):H(+) symporter. This chain is Low affinity potassium transport system protein Kup, found in Shigella dysenteriae serotype 1 (strain Sd197).